Reading from the N-terminus, the 347-residue chain is Protein RecA (347 aa).

64-71 provides a ligand contact to ATP; the sequence is GPESSGKT.

It belongs to the RecA family.

It is found in the cytoplasm. Functionally, can catalyze the hydrolysis of ATP in the presence of single-stranded DNA, the ATP-dependent uptake of single-stranded DNA by duplex DNA, and the ATP-dependent hybridization of homologous single-stranded DNAs. It interacts with LexA causing its activation and leading to its autocatalytic cleavage. The protein is Protein RecA of Bartonella tribocorum (strain CIP 105476 / IBS 506).